An 89-amino-acid polypeptide reads, in one-letter code: Acylphosphatase (89 aa).

The Acylphosphatase-like domain occupies 4–89 (SYIAHISGRV…WQEHHFFSIG (86 aa)). Residues R19 and N37 contribute to the active site.

It belongs to the acylphosphatase family.

The catalysed reaction is an acyl phosphate + H2O = a carboxylate + phosphate + H(+). The chain is Acylphosphatase (acyP) from Colwellia psychrerythraea (strain 34H / ATCC BAA-681) (Vibrio psychroerythus).